The following is a 529-amino-acid chain: Interleukin-21 receptor (529 aa).

The N-terminal stretch at 1–19 is a signal peptide; sequence MPRGPVAALLLLILHGAWS. Intrachain disulfides connect Cys-20–Cys-109, Cys-25–Cys-35, and Cys-65–Cys-81. The Extracellular segment spans residues 20–237; sequence CLDLTCYTDY…GEPEAGWDPH (218 aa). Fibronectin type-III domains lie at 21-118 and 119-228; these read LDLT…AESI and KPAP…TQAG. 5 N-linked (GlcNAc...) asparagine glycosylation sites follow: Asn-73, Asn-97, Asn-104, Asn-125, and Asn-182. Trp-214 carries C-linked (Man) tryptophan glycosylation. The WSXWS motif motif lies at 214–218; it reads WSEWS. A helical transmembrane segment spans residues 238–258; it reads MLLLLAVLIIVLVFMGLKIHL. Topologically, residues 259–529 are cytoplasmic; that stretch reads PWRLWKKIWA…PPVDSGAQSS (271 aa). The short motif at 266 to 274 is the Box 1 motif element; that stretch reads IWAPVPTPE. The segment at 458-529 is disordered; it reads TADPTWRTGS…PPVDSGAQSS (72 aa).

It belongs to the type I cytokine receptor family. Type 4 subfamily. As to quaternary structure, heterodimer with the common gamma subunit. Associates with JAK1. C-mannosylated at Trp-214 in the WSXWS motif, the sugar chain makes extensive hydrogen bonds with Asn-73 sugar, and bridges the two fibronectin domains transforming the V-shaped receptor into an A-frame. As to expression, selectively expressed in lymphoid tissues. Most highly expressed in thymus and spleen.

The protein resides in the membrane. Its function is as follows. This is a receptor for interleukin-21. The sequence is that of Interleukin-21 receptor (Il21r) from Mus musculus (Mouse).